A 325-amino-acid polypeptide reads, in one-letter code: NADH-ubiquinone oxidoreductase chain 1 (325 aa).

8 consecutive transmembrane segments (helical) span residues valine 5 to leucine 25, valine 79 to valine 99, isoleucine 105 to glycine 125, methionine 144 to serine 164, isoleucine 177 to glutamate 197, isoleucine 237 to leucine 257, isoleucine 263 to valine 283, and valine 302 to glutamine 322.

This sequence belongs to the complex I subunit 1 family.

The protein localises to the mitochondrion inner membrane. The enzyme catalyses a ubiquinone + NADH + 5 H(+)(in) = a ubiquinol + NAD(+) + 4 H(+)(out). Functionally, core subunit of the mitochondrial membrane respiratory chain NADH dehydrogenase (Complex I) that is believed to belong to the minimal assembly required for catalysis. Complex I functions in the transfer of electrons from NADH to the respiratory chain. The immediate electron acceptor for the enzyme is believed to be ubiquinone. This chain is NADH-ubiquinone oxidoreductase chain 1 (ND1), found in Petunia hybrida (Petunia).